We begin with the raw amino-acid sequence, 307 residues long: Actin maturation protease (307 aa).

The segment at 1–34 (MSLENDAAAPPPPPLPPPPPPQPPSLARSESSKK) is disordered. The segment covering 9 to 24 (APPPPPLPPPPPPQPP) has biased composition (pro residues). The tract at residues 80–200 (SLIQDGPQCG…WAVASGILLG (121 aa)) is peptidase C39-like. Cys88 is a catalytic residue.

Belongs to the ACTMAP family.

The protein resides in the cytoplasm. The catalysed reaction is N-terminal N(alpha)-acetyl-L-methionyl-L-aspartyl-[protein] + H2O = N-terminal L-aspartyl-[protein] + N-acetyl-L-methionine. It catalyses the reaction N-terminal N(alpha)-acetyl-L-methionyl-L-glutamyl-[protein] + H2O = N-terminal L-glutamyl-[protein] + N-acetyl-L-methionine. The enzyme catalyses N-terminal N(alpha)-acetyl-L-cysteinyl-L-aspartyl-[protein] + H2O = N-terminal L-aspartyl-[protein] + N-acetyl-L-cysteine. It carries out the reaction N-terminal N(alpha)-acetyl-L-cysteinyl-L-glutamyl-[protein] + H2O = N-terminal L-glutamyl-[protein] + N-acetyl-L-cysteine. Its function is as follows. Actin maturation protease that specifically mediates the cleavage of immature acetylated N-terminal actin, thereby contributing to actin maturation. Cleaves N-terminal acetylated methionine of immature cytoplasmic actin after translation. Cleaves N-terminal acetylated cysteine of muscle actin after canonical removal of N-terminal methionine. This is Actin maturation protease from Danio rerio (Zebrafish).